A 295-amino-acid chain; its full sequence is ATP synthase gamma chain (295 aa).

This sequence belongs to the ATPase gamma chain family. F-type ATPases have 2 components, CF(1) - the catalytic core - and CF(0) - the membrane proton channel. CF(1) has five subunits: alpha(3), beta(3), gamma(1), delta(1), epsilon(1). CF(0) has three main subunits: a, b and c.

It localises to the cell inner membrane. Functionally, produces ATP from ADP in the presence of a proton gradient across the membrane. The gamma chain is believed to be important in regulating ATPase activity and the flow of protons through the CF(0) complex. This is ATP synthase gamma chain from Aliarcobacter butzleri (strain RM4018) (Arcobacter butzleri).